A 176-amino-acid polypeptide reads, in one-letter code: NADH-quinone oxidoreductase subunit I 1 (176 aa).

4Fe-4S ferredoxin-type domains are found at residues 45–77 (IVLT…MEAT) and 87–116 (RWFR…MTPD). The [4Fe-4S] cluster site is built by cysteine 57, cysteine 60, cysteine 63, cysteine 67, cysteine 96, cysteine 99, cysteine 102, and cysteine 106.

It belongs to the complex I 23 kDa subunit family. As to quaternary structure, NDH-1 is composed of 14 different subunits. Subunits NuoA, H, J, K, L, M, N constitute the membrane sector of the complex. [4Fe-4S] cluster serves as cofactor.

It is found in the cell inner membrane. The enzyme catalyses a quinone + NADH + 5 H(+)(in) = a quinol + NAD(+) + 4 H(+)(out). NDH-1 shuttles electrons from NADH, via FMN and iron-sulfur (Fe-S) centers, to quinones in the respiratory chain. The immediate electron acceptor for the enzyme in this species is believed to be ubiquinone. Couples the redox reaction to proton translocation (for every two electrons transferred, four hydrogen ions are translocated across the cytoplasmic membrane), and thus conserves the redox energy in a proton gradient. This chain is NADH-quinone oxidoreductase subunit I 1, found in Geobacter metallireducens (strain ATCC 53774 / DSM 7210 / GS-15).